Consider the following 274-residue polypeptide: MMDQILGTNFTYEGAKEVARGLEGFSAKLAVGYIATIFGLKYYMKDRKAFDLSTPLNIWNGILSTFSLLGFLFTFPTLLSVIRKDGFSHTYSHVSELYTDSTSGYWIFLWVISKIPELLDTVFIVLRKRPLIFMHWYHHALTGYYALVCYHEDAVHMVWVVWMNYIIHAFMYGYYLLKSLKVPIPPSVAQAITTSQMVQFAVAIFAQVHVSYKHYVEGVEGLAYSFRGTAIGFFMLTTYFYLWIQFYKEHYLKNGGKKYNLAKDQAKTQTKKAN.

Residues 1-23 (MMDQILGTNFTYEGAKEVARGLE) lie on the Extracellular side of the membrane. Residues 24 to 44 (GFSAKLAVGYIATIFGLKYYM) traverse the membrane as a helical segment. Over 45–61 (KDRKAFDLSTPLNIWNG) the chain is Cytoplasmic. Residues 62–82 (ILSTFSLLGFLFTFPTLLSVI) traverse the membrane as a helical segment. The Extracellular segment spans residues 83–105 (RKDGFSHTYSHVSELYTDSTSGY). Residues 106–126 (WIFLWVISKIPELLDTVFIVL) traverse the membrane as a helical segment. Residues 127 to 129 (RKR) lie on the Cytoplasmic side of the membrane. A helical membrane pass occupies residues 130–150 (PLIFMHWYHHALTGYYALVCY). Over 151–156 (HEDAVH) the chain is Extracellular. The helical transmembrane segment at 157–177 (MVWVVWMNYIIHAFMYGYYLL) threads the bilayer. Residues 178-187 (KSLKVPIPPS) lie on the Cytoplasmic side of the membrane. Residues 188–208 (VAQAITTSQMVQFAVAIFAQV) form a helical membrane-spanning segment. Topologically, residues 209–227 (HVSYKHYVEGVEGLAYSFR) are extracellular. Residues 228-248 (GTAIGFFMLTTYFYLWIQFYK) traverse the membrane as a helical segment. Over 249 to 274 (EHYLKNGGKKYNLAKDQAKTQTKKAN) the chain is Cytoplasmic.

It belongs to the ELO family. As to expression, expressed in the gut and unidentified head cells.

Its subcellular location is the membrane. The catalysed reaction is 11-methyldodecanoyl-CoA + malonyl-CoA + H(+) = 3-oxoisopentadecanoyl-CoA + CO2 + CoA. The enzyme catalyses isopentadecanoyl-CoA + malonyl-CoA + H(+) = 3-oxoisoheptadecanoyl-CoA + CO2 + CoA. It functions in the pathway lipid metabolism; fatty acid biosynthesis. Its function is as follows. Catalyzes the first and rate-limiting reaction of the four reactions that constitute the long-chain fatty acids elongation cycle. Uses malonyl-CoA to add 2 carbons per cycle to the chain of long-chain fatty acids. Condensing enzyme required for the formation of isopentadecanoate (C15iso) and isoheptadecanoate (C17iso), both play critical roles in animal development and growth. The polypeptide is Long chain fatty acid elongase 5 (Caenorhabditis elegans).